A 210-amino-acid chain; its full sequence is 3-hexulose-6-phosphate synthase (210 aa).

The protein belongs to the HPS/KGPDC family. HPS subfamily.

The enzyme catalyses D-ribulose 5-phosphate + formaldehyde = D-arabino-hex-3-ulose 6-phosphate. It participates in one-carbon metabolism; formaldehyde assimilation via RuMP pathway; D-fructose 6-phosphate from D-ribulose 5-phosphate and formaldehyde: step 1/2. In terms of biological role, catalyzes the condensation of ribulose 5-phosphate with formaldehyde to form 3-hexulose 6-phosphate. Together with HxlB, may act as a formaldehyde detoxification system. The polypeptide is 3-hexulose-6-phosphate synthase (hxlA) (Bacillus subtilis (strain 168)).